The following is a 235-amino-acid chain: Transcription factor hepR (235 aa).

Positions 14-45 (QNSPESSRDVLSMASPGLLPIDPSPEHDETNK) are disordered. The C2H2-type zinc-finger motif lies at 175 to 205 (IQCPCLDERGERCSRMFSRLDNMRDHVRRIH).

Its subcellular location is the nucleus. Its function is as follows. Transcription factor; part of the gene cluster that mediates the biosynthesis of heptelidic acid (HA), a sesquiterpene lactone that acts as an inhibitor of glyceraldehyde-3-phosphatedehydrogenase (GAPDH) and a growth inhibitor of the salt-tolerant lactic acid bacteria in soy sauce brewing. Both hepR and hepS regulate the transcription of the heptelidic acid cluster, but they are not involved in mutual transcriptional regulation and act with different mechanisms. This Aspergillus oryzae (strain ATCC 42149 / RIB 40) (Yellow koji mold) protein is Transcription factor hepR.